The following is a 1576-amino-acid chain: eIF-2-alpha kinase GCN2 (1576 aa).

One can recognise an RWD domain in the interval 16–127; sequence NEIEALKAIF…SIVQDYLNDW (112 aa). The tract at residues 180 to 204 is disordered; that stretch reads QDELQRRSYETPQSSSKKKTNSKET. 2 consecutive Protein kinase domains span residues 235–511 and 556–928; these read VLPL…HVIR and FEEL…EEFI. Residues 562–570 and K585 each bind ATP; that span reads LGRGGFGEV. Positions 673–714 are disordered; sequence YNSSADEEDPEASDISFQYSNTSDKEGSSDKDSSIEEASSVK. Positions 695–706 are enriched in basic and acidic residues; it reads SDKEGSSDKDSS. D772 functions as the Proton acceptor in the catalytic mechanism.

The protein belongs to the protein kinase superfamily. Ser/Thr protein kinase family. GCN2 subfamily. In terms of assembly, homodimer; homodimerization is important for kinase activation by uncharged tRNAs. Interacts (via N-terminal RWD domain) with gcn1 (via N- and C-terminus); this interaction stimulates gcn2 kinase activity in a gcn20-dependent manner in response to amino acid starvation. Interacts (via N-terminus) with the gcn1-gcn20 complex on translating ribosomes in amino acid-starved cells; gcn1 may bind near the ribosomal A-site and promotes the transfer of uncharged tRNAs from the A-site to the tRNA-binding domain in gcn2 for its subsequent kinase activation, and hence allowing fil1 translational activation and derepression of amino acid biosynthetic genes. Post-translationally, autophosphorylated.

The protein resides in the cytoplasm. It catalyses the reaction L-seryl-[protein] + ATP = O-phospho-L-seryl-[protein] + ADP + H(+). The enzyme catalyses L-threonyl-[protein] + ATP = O-phospho-L-threonyl-[protein] + ADP + H(+). Its activity is regulated as follows. The integrated stress response (ISR) is activated in response to conditions that promote ribosome collisions: gcn1, which acts as a ribosome collision sensor, activates gcn2. The RQC pathway and the integrated stress response (ISR) antagonize each other: hel2 prevents the activation of gcn2, while gcn2 suppresses RQC activation. Ribosome stalling-induced integrated stress response prefers ribosomes with empty A sites. The kinase activity is stimulated upon binding to uncharged tRNAs. Metabolic-stress sensing protein kinase that phosphorylates the alpha subunit of eukaryotic translation initiation factor 2 (eIF-2-alpha/SUI2) on 'Ser-52' in response to low amino acid, carbon, or purine availability. Required for adapatation to nutrient starvation by acting as a key component of the integrated stress response (ISR), by which cells alter their translational and transcriptional output in response to starvation. Converts phosphorylated eIF-2-alpha/SUI2 either to a competitive inhibitor of translation initiation factor eIF-2B, leading to a global protein synthesis repression, and thus to a reduced overall utilization of amino acids, or to a translational initiation activation of specific mRNAs, such as the transcriptional activator GCN4, and hence allowing GCN4-mediated reprogramming of transcription to alleviate nutrient depletion. Binds uncharged tRNAs. The chain is eIF-2-alpha kinase GCN2 from Schizosaccharomyces pombe (strain 972 / ATCC 24843) (Fission yeast).